A 298-amino-acid polypeptide reads, in one-letter code: Small ribosomal subunit biogenesis GTPase RsgA 1 (298 aa).

Residues 63–224 (QTQLVRPPVA…VADTPGFSSY (162 aa)) enclose the CP-type G domain. GTP-binding positions include 112–115 (AKTD) and 167–175 (GQTGAGKST). Residues C248, C253, H255, and C261 each coordinate Zn(2+).

It belongs to the TRAFAC class YlqF/YawG GTPase family. RsgA subfamily. Monomer. Associates with 30S ribosomal subunit, binds 16S rRNA. Zn(2+) serves as cofactor.

It localises to the cytoplasm. Functionally, one of several proteins that assist in the late maturation steps of the functional core of the 30S ribosomal subunit. Helps release RbfA from mature subunits. May play a role in the assembly of ribosomal proteins into the subunit. Circularly permuted GTPase that catalyzes slow GTP hydrolysis, GTPase activity is stimulated by the 30S ribosomal subunit. This is Small ribosomal subunit biogenesis GTPase RsgA 1 from Lactiplantibacillus plantarum (strain ATCC BAA-793 / NCIMB 8826 / WCFS1) (Lactobacillus plantarum).